We begin with the raw amino-acid sequence, 310 residues long: UPF0761 membrane protein VSAL_I2938 (310 aa).

6 consecutive transmembrane segments (helical) span residues 34 to 54, 97 to 117, 136 to 156, 178 to 198, 207 to 227, and 242 to 262; these read YMAY…LSVL, MTAV…SAID, FSLY…SLAA, LLGW…YLLV, HALV…VGFA, and ALAA…IVLI.

This sequence belongs to the UPF0761 family.

The protein localises to the cell inner membrane. The polypeptide is UPF0761 membrane protein VSAL_I2938 (Aliivibrio salmonicida (strain LFI1238) (Vibrio salmonicida (strain LFI1238))).